A 224-amino-acid polypeptide reads, in one-letter code: Cytidylate kinase (224 aa).

12 to 20 (GPSGAGKGT) contacts ATP.

The protein belongs to the cytidylate kinase family. Type 1 subfamily.

The protein resides in the cytoplasm. It carries out the reaction CMP + ATP = CDP + ADP. The enzyme catalyses dCMP + ATP = dCDP + ADP. This Aliivibrio salmonicida (strain LFI1238) (Vibrio salmonicida (strain LFI1238)) protein is Cytidylate kinase.